Reading from the N-terminus, the 302-residue chain is Nucleotide-binding protein RHOS4_02640 (302 aa).

Residue 15–22 (GPSGAGRT) coordinates ATP. 62–65 (DVRN) is a binding site for GTP.

This sequence belongs to the RapZ-like family.

Its function is as follows. Displays ATPase and GTPase activities. The polypeptide is Nucleotide-binding protein RHOS4_02640 (Cereibacter sphaeroides (strain ATCC 17023 / DSM 158 / JCM 6121 / CCUG 31486 / LMG 2827 / NBRC 12203 / NCIMB 8253 / ATH 2.4.1.) (Rhodobacter sphaeroides)).